The following is a 309-amino-acid chain: NAD kinase (309 aa).

Asp89 serves as the catalytic Proton acceptor. NAD(+) contacts are provided by residues 89–90 (DG), 163–164 (NE), Arg191, Asp193, and 204–209 (TAYSLS).

It belongs to the NAD kinase family. Requires a divalent metal cation as cofactor.

The protein resides in the cytoplasm. The enzyme catalyses NAD(+) + ATP = ADP + NADP(+) + H(+). Its function is as follows. Involved in the regulation of the intracellular balance of NAD and NADP, and is a key enzyme in the biosynthesis of NADP. Catalyzes specifically the phosphorylation on 2'-hydroxyl of the adenosine moiety of NAD to yield NADP. In Shewanella halifaxensis (strain HAW-EB4), this protein is NAD kinase.